Consider the following 294-residue polypeptide: 1,4-dihydroxy-2-naphthoate octaprenyltransferase (294 aa).

The next 6 membrane-spanning stretches (helical) occupy residues 35–55 (SAVW…VIGV), 103–123 (AGLA…ATCI), 140–160 (GFGE…GTEY), 166–186 (VDWV…SVLV), 220–240 (LLVA…WCAV), and 272–292 (GLAM…AGSV).

The protein belongs to the MenA family. Type 1 subfamily.

The protein localises to the cell membrane. It carries out the reaction an all-trans-polyprenyl diphosphate + 1,4-dihydroxy-2-naphthoate + H(+) = a 2-demethylmenaquinol + CO2 + diphosphate. It participates in quinol/quinone metabolism; menaquinone biosynthesis; menaquinol from 1,4-dihydroxy-2-naphthoate: step 1/2. Its function is as follows. Conversion of 1,4-dihydroxy-2-naphthoate (DHNA) to demethylmenaquinone (DMK). The sequence is that of 1,4-dihydroxy-2-naphthoate octaprenyltransferase from Mycobacterium leprae (strain TN).